A 423-amino-acid chain; its full sequence is ATP-dependent RNA helicase RhlB (423 aa).

The Q motif motif lies at 9–37; sequence LRFSDLPLHHQVLAALQEKGFDYCTPIQA. In terms of domain architecture, Helicase ATP-binding spans 40 to 217; the sequence is LPMSLAGKDV…FEDMNDPEYV (178 aa). 53–60 provides a ligand contact to ATP; that stretch reads AQTGTGKT. The short motif at 163–166 is the DEAD box element; the sequence is DEAD. A Helicase C-terminal domain is found at 241–388; the sequence is KMALLLTLLE…VSQYDVAALL (148 aa). Residues 397–423 form a disordered region; the sequence is KRGNNNSKNSANSNRTFQKKRSLKRNF. Over residues 400-410 the composition is skewed to low complexity; that stretch reads NNNSKNSANSN. Positions 413 to 423 are enriched in basic residues; that stretch reads FQKKRSLKRNF.

It belongs to the DEAD box helicase family. RhlB subfamily. In terms of assembly, component of the RNA degradosome, which is a multiprotein complex involved in RNA processing and mRNA degradation.

It localises to the cytoplasm. The catalysed reaction is ATP + H2O = ADP + phosphate + H(+). DEAD-box RNA helicase involved in RNA degradation. Has RNA-dependent ATPase activity and unwinds double-stranded RNA. This chain is ATP-dependent RNA helicase RhlB, found in Pasteurella multocida (strain Pm70).